We begin with the raw amino-acid sequence, 2646 residues long: MSGLLDDDEIIQVSPDSIITSSIGSASLNYSVNGADDNKSIPPSSPQQNLLENDTLSPPPPLPTQTINTSSSPPPPTIITTTTTTTTTTAMSPVATTTTSSPTISASPTYITSPSGTRLSGGNTFNAQQLKSLLLASNIPIPPVPTSPTSTPPNLQTNNNNKQDKDKDNETFATLINEELPLTTEEKENIKAQKKDLISSLPEVPLFISPSPTLSRNNNGKRNSGGNKPPLSPIKISSTSAAGDVSPSISLNNSGSGIYNSTSPSGTASTQTLNILSQLQQQQRNGNNNNNNNNNNNYLSSPTMPALNKHSTHGNFHNSVAGYGNNNNNNNNNNKQPQHPMNGNHSPSNGTSGSLSMSGSGIDNGGNNNNNSNTHGSSSNQSSGVTSPIIQSTSPQPPHLTGLNSDSQMPLSSSPTMGYPRGNHNKKTSASAVSSQNRSPLMNSTGVSSSSSGVKQAGAGEKVMQFLGKMSLSKERMSKLVSQSKEQYKTPSSPYQQSTSSSISSGSGTISGHTSPNSLNSVQVVPFEGIFGIPLRVILRYPNESGNQIPSILNSIFTILESSSALSTNRLFYGDYNTSTSNLASSISPISTAANTTIPTISVPTSPNLSSSLSSSSSSGSSGNSSPNIINQLQQQQQPQPTTTTTTNTNTSPHQYLSQKSIKLEVENICNQYDQGIEVSLKKCNVHVVSEILIEFFNRLPEPIISVEFYETLLNYYQTETLLHLMIRKMNNPNKSILCRLMKYLKDIMVYTNFNDVTLELLVERFHKFILRPTIGTIAQSKEISESHLKTIKDIVTMFIQQADILFQSPEERMNTDDAQILYIEEVLTSTQKSQHQSSVGNLWLFHKQIVWRPKVNIDHGEPDLAILFSSILKIVLYTPPQSSSSSSSSSISNSSSASSSSSSTPSISSTSLSSSLKVLPNFTVYCSSDTKTVITFSFQSPSTCKLIYAYINSVTKSISQLNRIIPQKLDMFSLELESLPNEIKQLKDLQELNLNRNKFKLLPGDLARLTSLRTICIEENNLTEISSEMADFLGTRLSNLENVTLSSNRLVVLPPLYTWLKLKTLNISNNYLTKLPIDIFQIPTLEVLRVSNNDLDDNGIPKICTSTKLRSLDLRKNHLTSIPEGIINLVELQVLTLADNQISHLTSDIQKLTSLTELNLNGNQIQSLPPQLLLLTNLKKLYLDNNQLQSISSAIHRMQSLIELRLTNNNISRLPPGIVALKKLNSLELTGNKPLKDNIPEKYIQKGKEGIFSFFSETMRTNVPCYRTRIIMLGDKSTGKSNLIKCLKKLPKSSFSSSSSNLPSLNNLNSNNSNNSGNSKTNILDIQDWQCPINVDGPDGKKKKTITIHLWEFEGMQNDISHVFFVPNIIYTVCFNLSKFGSSKSNEQKITSYLHGINNYDKKATIIIIGTHLDEISSNSKKQVDKVFDCLSLKYKQLFPTLNLVFHAVSTLKSDADGIRKLRRDIKQMIAKNPILKQTYPASFMFLEDYLKEESNLMSPPLVTKKTLQQMARTMELHNEPHFTQLKSLFNSLGSIALFEQFIRMEPGSTPQKTEMIALNPIWIAKAIASLVCFNPQNLPFNVSVSAEEANDASHDSTITGILPHRVLRYVWGTNSKYYVPERFFSLFLSLLESNDLAINIYSLEVNNNNNNNSNGNNVGRGRSGSRSMSIHEANRSNSYFGVNLNNTSSLSSFTSNQKVRNGRSSSFNARVGWALVSSLLAPPPQLSINGNCSISSNSSSSSSSLSNALNLNNISSMIPIIDLPGIWEAFPESPEIHQFSRRFSLDVIPNGLFGRLLSRLMQHAHLYKCWKDLAILVPEIASMSTTSSSSSSSTANSTTTTSATTLQSLASGSSNNTLQQQFREERILVNVDHDSNTIEITIRFIRPSTLSSQVYSIFESLVSKWYKVSFKTFIPCSHCIEKKIVTPHLFKLEECEAQIFKGELGIYCQYKPNNNNSSNDTSSPIASSRSNPKISRKDSKNLIQSNNNDNNNSLSKKDLKELAKQNKEKEKEKEKDKDKEKEKERKVEIYRDDSFLVPIRSLLLDQFSICHFIKEIDYREIEVLPDHSNQNENGTSTQSMMGMYGKQFVNIKVFNAPLLGADFQNNCARILSSFRHEALSLYNFRHSNVLSIIGISMNPIAIITENPTFGSKGSTTLSEYIQDRQKHPEIPWNIKLKIALDIARAMDKLNSHSPPFLLTNLTSSGIILEKSNDHQSSGNGLEIEPFVNAKIIDFSQSSFLPSLFPTSTTPKSYHSPEVLQKLNYHENSDVYSFGIILYELLTRSIAFQDHDRFSNIVISGQRPSIPLDCLPSFADLIKDCWSGEPLNRPSPSKIISQLYTIKKEIESKEHSYKSLASDNNIYSDHPLPSGGSIIYQDKIIHFGGWNNSSKPHSKVFALNLSSMLFEDKLMVVLNNKQSTTYKAFYTHMQSEFNEENLMFYEAIKTFKSLPNQTPDDREIIKIQSKKIYQVFIGENAPKEINLPFLLKKELKNKIDFPDGPSVTVFNDTLTFVISSIEDSFHRFKFTVPTTNKNGWVEIECKGIPPLPMVGHSSILWNNSLIVIGGWFNKARLLNQIHILNLETFEWNQFVCTGDIPPSSIAALNITLHGDYLLAYYERTDSIKQQIFRLSLDSFIWFSLKLSNV.

Disordered stretches follow at residues 28 to 122 (LNYS…LSGG), 138 to 168 (NIPI…KDKD), 205 to 248 (PLFI…VSPS), 281 to 457 (QQQR…VKQA), 477 to 516 (MSKL…HTSP), 605 to 656 (TSPN…PHQY), and 882 to 907 (QSSS…STPS). A compositionally biased stretch (polar residues) spans 46–56 (PQQNLLENDTL). Low complexity-rich tracts occupy residues 78-115 (IITT…TSPS), 147-161 (SPTS…NNNN), and 215-228 (SRNN…GGNK). The span at 235-248 (KISSTSAAGDVSPS) shows a compositional bias: polar residues. Low complexity-rich tracts occupy residues 285–297 (NGNN…NNNN) and 325–334 (NNNNNNNNNN). The segment covering 335-345 (KQPQHPMNGNH) has biased composition (polar residues). Over residues 346–394 (SPSNGTSGSLSMSGSGIDNGGNNNNNSNTHGSSSNQSSGVTSPIIQSTS) the composition is skewed to low complexity. Polar residues-rich tracts occupy residues 402–416 (GLNS…SSPT) and 428–443 (TSAS…PLMN). Composition is skewed to low complexity over residues 444-454 (STGVSSSSSGV), 491-516 (PSSP…HTSP), 605-627 (TSPN…NSSP), 634-651 (QQQQ…NTNT), and 883-907 (SSSS…STPS). Positions 585 to 807 (SSISPISTAA…MFIQQADILF (223 aa)) constitute a Rho-GAP domain. LRR repeat units lie at residues 968-987 (QKLD…IKQL), 989-1011 (DLQE…ARLT), 1012-1033 (SLRT…MADF), 1040-1061 (NLEN…YTWL), 1062-1083 (KLKT…IFQI), 1085-1108 (TLEV…CTST), 1109-1131 (KLRS…INLV), 1132-1154 (ELQV…QKLT), 1155-1176 (SLTE…LLLL), 1178-1199 (NLKK…IHRM), 1201-1222 (SLIE…IVAL), 1224-1247 (KLNS…YIQK), 1248-1270 (GKEG…YRTR), 1271-1298 (IIML…SFSS), and 1303-1327 (LPSL…ILDI). The Roc domain maps to 1262-1474 (TNVPCYRTRI…RDIKQMIAKN (213 aa)). Disordered stretches follow at residues 1293 to 1317 (KSSF…SNNS), 1651 to 1670 (NNNN…SRSM), and 1957 to 2026 (NNSS…KEKE). A compositionally biased stretch (low complexity) spans 1651-1669 (NNNNSNGNNVGRGRSGSRS). Residues 1966–1975 (PIASSRSNPK) show a composition bias toward polar residues. Residues 1983-1996 (NLIQSNNNDNNNSL) are compositionally biased toward low complexity. A compositionally biased stretch (basic and acidic residues) spans 1997 to 2026 (SKKDLKELAKQNKEKEKEKEKDKDKEKEKE). The Protein kinase domain maps to 2049-2342 (FSICHFIKEI…PSKIISQLYT (294 aa)). Residues 2055 to 2063 (IKEIDYREI) and Lys2094 contribute to the ATP site. The 125-residue stretch at 2412–2536 (MVVLNNKQST…FTVPTTNKNG (125 aa)) folds into the RGS domain.

It belongs to the protein kinase superfamily. TKL Ser/Thr protein kinase family. ROCO subfamily.

In Dictyostelium discoideum (Social amoeba), this protein is Probable inactive serine/threonine-protein kinase roco10 (roco10).